Consider the following 353-residue polypeptide: Polyprenal reductase 2 (353 aa).

The next 6 helical transmembrane spans lie at 11-31, 78-98, 175-195, 234-254, 291-308, and 313-335; these read PLLCFAWIAATLPIIAAALPI, FMHFYVVGVLATTILLLAIWF, MHIVGYLTGLFYYVAAPLSLA, PLLKLGWTQWIGAVIFIWGSL, YLAELVIYFGMLVASGAE, and WFLFIFVITNLSFAAVETYNWYL.

Belongs to the steroid 5-alpha reductase family. Polyprenal reductase subfamily.

It is found in the cell membrane. The enzyme catalyses a di-trans,poly-cis-dolichal + NADP(+) = a di-trans,poly-cis-polyprenal + NADPH + H(+). Its pathway is protein modification; protein glycosylation. Functionally, plays a key role in early steps of protein N-linked glycosylation by being involved in the conversion of polyprenol into dolichol. Acts as a polyprenal reductase that mediates the reduction of polyprenal into dolichal in a NADP-dependent mechanism. Dolichols are required for the synthesis of dolichol-linked monosaccharides and the oligosaccharide precursor used for N-glycosylation. The chain is Polyprenal reductase 2 from Oryza sativa subsp. japonica (Rice).